The sequence spans 115 residues: NADH-ubiquinone oxidoreductase chain 3 (115 aa).

The next 3 helical transmembrane spans lie at 4–24, 55–75, and 87–107; these read LLAMLINITLSLLLISIAFWL, FFLVAITFLLFDLEIALLLPI, and MMLTAFILVTILALGLAYEWI.

It belongs to the complex I subunit 3 family. Core subunit of respiratory chain NADH dehydrogenase (Complex I) which is composed of 45 different subunits. Interacts with TMEM186. Interacts with TMEM242.

The protein resides in the mitochondrion inner membrane. The catalysed reaction is a ubiquinone + NADH + 5 H(+)(in) = a ubiquinol + NAD(+) + 4 H(+)(out). Functionally, core subunit of the mitochondrial membrane respiratory chain NADH dehydrogenase (Complex I) which catalyzes electron transfer from NADH through the respiratory chain, using ubiquinone as an electron acceptor. Essential for the catalytic activity of complex I. The protein is NADH-ubiquinone oxidoreductase chain 3 of Neotoma floridana (Eastern woodrat).